The chain runs to 2871 residues: Fibrillin-1 (2871 aa).

A signal peptide spans 1-24 (MRRGRLLEIALGFTVLLASYTSHG). Residues 25 to 44 (ADANLEAGNVKETRASRAKR) constitute a propeptide that is removed on maturation. The interval 45–81 (RGGGGHDALKGPNVCGSRYNAYCCPGWKTLPGGNQCI) is fibrillin unique N-terminal (FUN) domain. An N-terminal domain region spans residues 45-450 (RGGGGHDALK…PPRVLPVNVT (406 aa)). 11 disulfides stabilise this stretch: C59/C68, C67/C80, C85/C94, C89/C100, C102/C111, C119/C129, C123/C134, C136/C145, C150/C160, C154/C166, and C168/C177. 3 consecutive EGF-like domains span residues 81 to 112 (IVPI…PSCG), 115 to 146 (SIQH…THCG), and 147 to 178 (QPVC…PQCE). Positions 119–329 (CNIRCMNGGS…YTSPDGTRCI (211 aa)) are interaction with MFAP4. The TB 1 domain occupies 184–236 (GPCFTVISNQMCQGQLSGIVCTKTLCCATVGRAWGHPCEMCPAQPHPCRRGFI). The hybrid domain 1 stretch occupies residues 195–221 (CQGQLSGIVCTKTLCCATVGRAWGHPC). The region spanning 246–287 (DVDECQAIPGLCQGGNCINTVGSFECKCPAGHKLNEVSQKCE) is the EGF-like 4; calcium-binding domain. Cystine bridges form between C250/C262, C257/C271, C273/C286, C292/C304, C299/C313, and C315/C328. O-linked (Glc) serine glycosylation occurs at S268. The EGF-like 5; calcium-binding domain maps to 288–329 (DIDECSTIPGICEGGECTNTVSSYFCKCPPGFYTSPDGTRCI). The 56-residue stretch at 334 to 389 (GYCYTALTNGRCSNQLPQSITKMQCCCDAGRCWSPGVTVAPEMCPIRATEDFNKLC) folds into the TB 2 domain. An N-linked (GlcNAc...) asparagine glycan is attached at N448. The 41-residue stretch at 449–489 (VTDYCQLVRYLCQNGRCIPTPGSYRCECNKGFQLDLRGECI) folds into the EGF-like 6 domain. Cystine bridges form between C453–C465, C460–C474, C476–C488, C494–C504, C499–C513, C515–C528, C534–C546, C541–C555, C557–C570, C576–C587, C582–C596, C598–C611, C617–C628, C623–C637, and C639–C652. O-linked (Glc) serine glycosylation occurs at S471. The region spanning 490–529 (DVDECEKNPCAGGECINNQGSYTCQCRAGYQSTLTRTECR) is the EGF-like 7; calcium-binding domain. O-linked (Glc) serine glycosylation is present at S510. Positions 530-571 (DIDECLQNGRICNNGRCINTDGSFHCVCNAGFHVTRDGKNCE) constitute an EGF-like 8; calcium-binding domain. O-linked (Glc) serine glycosylation is present at S552. Residues 572–612 (DMDECSIRNMCLNGMCINEDGSFKCICKPGFQLASDGRYCK) enclose the EGF-like 9; calcium-binding domain. O-linked (Glc) serine glycosylation occurs at S593. The EGF-like 10; calcium-binding domain occupies 613-653 (DINECETPGICMNGRCVNTDGSYRCECFPGLAVGLDGRVCV). S634 carries an O-linked (Glc) serine glycan. The TB 3 domain occupies 659–711 (STCYGGYKRGQCIKPLFGAVTKSECCCASTEYAFGEPCQPCPAQNSAEYQALC). Residues 723-764 (DINECALDPDICPNGICENLRGTYKCICNSGYEVDSTGKNCV) form the EGF-like 11; calcium-binding domain. Intrachain disulfides connect C727–C739, C734–C748, C750–C763, C769–C781, C776–C790, C792–C805, C811–C821, C816–C830, C832–C845, C853–C875, C862–C887, C876–C890, C896–C908, C914–C926, C921–C935, and C937–C950. Residues 765 to 806 (DINECVLNSLLCDNGQCRNTPGSFVCTCPKGFIYKPDLKTCE) form the EGF-like 12; calcium-binding domain. An O-linked (Glc) serine glycan is attached at S787. In terms of domain architecture, EGF-like 13; calcium-binding spans 807 to 846 (DIDECESSPCINGVCKNSPGSFICECSSESTLDPTKTICI). O-linked (Glc) serine glycosylation occurs at S827. The 52-residue stretch at 851–902 (GTCWQTVIDGRCEININGATLKSQCCSSLGAAWGSPCTLCQVDPICGKGYSR) folds into the TB 4 domain. The segment at 862–887 (CEININGATLKSQCCSSLGAAWGSPC) is hybrid domain 2. One can recognise an EGF-like 14; calcium-binding domain in the interval 910-951 (DIDECEVFPGVCKNGLCVNTRGSFKCQCPSGMTLDATGRICL). Residues 956-1008 (ETCFLRYEDEECTLPIAGRHRMDACCCSVGAAWGTEECEECPMRNTPEYEELC) form the TB 5 domain. The EGF-like 15; calcium-binding domain occupies 1028 to 1069 (DINECKMIPSLCTHGKCRNTIGSFKCRCDSGFALDSEERNCT). Disulfide bonds link C1032/C1044, C1039/C1053, C1055/C1068, C1074/C1086, C1081/C1095, C1097/C1111, C1117/C1129, C1124/C1138, C1140/C1153, C1159/C1171, C1166/C1180, C1182/C1195, C1201/C1212, C1208/C1221, C1223/C1236, C1242/C1254, C1249/C1263, C1265/C1278, C1284/C1296, C1291/C1305, C1307/C1320, C1326/C1339, C1333/C1348, C1350/C1361, C1367/C1380, C1374/C1389, C1391/C1402, C1408/C1420, C1415/C1429, C1431/C1444, C1450/C1461, C1456/C1470, C1472/C1485, C1491/C1502, C1497/C1511, C1513/C1526, C1534/C1562, C1549/C1574, C1563/C1577, C1564/C1589, C1610/C1622, C1617/C1631, C1633/C1646, C1652/C1663, C1658/C1672, and C1674/C1687. O-linked (Glc) serine glycosylation occurs at S1050. N-linked (GlcNAc...) asparagine glycosylation is present at N1067. In terms of domain architecture, EGF-like 16; calcium-binding spans 1070–1112 (DIDECRISPDLCGRGQCVNTPGDFECKCDEGYESGFMMMKNCM). The EGF-like 17; calcium-binding domain maps to 1113 to 1154 (DIDECQRDPLLCRGGVCHNTEGSYRCECPPGHQLSPNISACI). The O-linked (Glc) serine glycan is linked to S1135. Residue N1149 is glycosylated (N-linked (GlcNAc...) asparagine). The EGF-like 18; calcium-binding domain maps to 1155–1196 (DINECELSAHLCPNGRCVNLIGKYQCACNPGYHSTPDRLFCV). The EGF-like 19; calcium-binding domain occupies 1197-1237 (DIDECSIMNGGCETFCTNSEGSYECSCQPGFALMPDQRSCT). A glycan (O-linked (Glc) serine) is linked at S1218. The 42-residue stretch at 1238-1279 (DIDECEDNPNICDGGQCTNIPGEYRCLCYDGFMASEDMKTCV) folds into the EGF-like 20; calcium-binding domain. The EGF-like 21; calcium-binding domain maps to 1280–1321 (DVNECDLNPNICLSGTCENTKGSFICHCDMGYSGKKGKTGCT). An O-linked (Glc) serine glycan is attached at S1302. Residues 1322–1362 (DINECEIGAHNCGKHAVCTNTAGSFKCSCSPGWIGDGIKCT) form the EGF-like 22; calcium-binding domain. O-linked (Glc) serine glycosylation is present at S1345. The region spanning 1363 to 1403 (DLDECSNGTHMCSQHADCKNTMGSYRCLCKEGYTGDGFTCT) is the EGF-like 23; calcium-binding domain. An N-linked (GlcNAc...) asparagine glycan is attached at N1369. S1386 carries O-linked (Glc) serine glycosylation. Positions 1404–1445 (DLDECSENLNLCGNGQCLNAPGGYRCECDMGFVPSADGKACE) constitute an EGF-like 24; calcium-binding domain. Positions 1446 to 1486 (DIDECSLPNICVFGTCHNLPGLFRCECEIGYELDRSGGNCT) constitute an EGF-like 25; calcium-binding domain. N1484 is a glycosylation site (N-linked (GlcNAc...) asparagine). One can recognise an EGF-like 26; calcium-binding domain in the interval 1487–1527 (DVNECLDPTTCISGNCVNTPGSYICDCPPDFELNPTRVGCV). A glycan (O-linked (Glc) serine) is linked at S1508. Residues 1528-2731 (DTRSGNCYLD…GYPKRGRKRR (1204 aa)) are C-terminal domain. A TB 6 domain is found at 1532–1589 (GNCYLDIRPRGDNGDTACSNEIGVGVSKASCCCSLGKAWGTPCEMCPAVNTSEYKILC). The Cell attachment site motif lies at 1541 to 1543 (RGD). Residue N1581 is glycosylated (N-linked (GlcNAc...) asparagine). Residues 1606–1647 (DIDECQELPGLCQGGKCINTFGSFQCRCPTGYYLNEDTRVCD) enclose the EGF-like 27; calcium-binding domain. The O-linked (Glc) serine glycan is linked to S1628. The region spanning 1648–1688 (DVNECETPGICGPGTCYNTVGNYTCICPPDYMQVNGGNNCM) is the EGF-like 28; calcium-binding domain. N-linked (GlcNAc...) asparagine glycosylation is present at N1669. One can recognise a TB 7 domain in the interval 1693 to 1748 (SLCYRNYYADNQTCDGELLFNMTKKMCCCSYNIGRAWNKPCEQCPIPSTDEFATLC). N-linked (GlcNAc...) asparagine glycosylation is found at N1703 and N1713. Positions 1766-1807 (DIDECREIPGVCENGVCINMVGSFRCECPVGFFYNDKLLVCE) constitute an EGF-like 29; calcium-binding domain. 40 disulfide bridges follow: C1770/C1782, C1777/C1791, C1793/C1806, C1812/C1824, C1818/C1833, C1835/C1847, C1853/C1865, C1860/C1874, C1876/C1889, C1895/C1905, C1900/C1914, C1916/C1928, C1934/C1947, C1942/C1956, C1958/C1971, C1977/C1989, C1984/C1998, C2000/C2011, C2017/C2029, C2024/C2038, C2040/C2053, C2061/C2083, C2070/C2096, C2084/C2099, C2085/C2111, C2131/C2142, C2137/C2151, C2153/C2164, C2170/C2181, C2176/C2190, C2192/C2204, C2210/C2221, C2217/C2230, C2232/C2245, C2251/C2265, C2258/C2274, C2276/C2289, C2295/C2307, C2302/C2316, and C2318/C2331. The EGF-like 30; calcium-binding domain occupies 1808 to 1848 (DIDECQNGPVCQRNAECINTAGSYRCDCKPGYRFTSTGQCN). S1830 is a glycosylation site (O-linked (Glc) serine). The region spanning 1849–1890 (DRNECQEIPNICSHGQCIDTVGSFYCLCHTGFKTNDDQTMCL) is the EGF-like 31; calcium-binding domain. S1871 carries an O-linked (Glc) serine glycan. Residues 1891-1929 (DINECERDACGNGTCRNTIGSFNCRCNHGFILSHNNDCI) enclose the EGF-like 32; calcium-binding domain. N-linked (GlcNAc...) asparagine glycosylation is present at N1902. An O-linked (Glc) serine glycan is attached at S1911. An EGF-like 33; calcium-binding domain is found at 1930–1972 (DVDECASGNGNLCRNGQCINTVGSFQCQCNEGYEVAPDGRTCV). The O-linked (Glc) serine glycan is linked to S1953. Residues 1973-2012 (DINECLLEPRKCAPGTCQNLDGSYRCICPPGYSLQNEKCE) form the EGF-like 34; calcium-binding domain. In terms of domain architecture, EGF-like 35; calcium-binding spans 2013–2054 (DIDECVEEPEICALGTCSNTEGSFKCLCPEGFSLSSSGRRCQ). An O-linked (Glc) serine glycan is attached at S2035. One can recognise a TB 8 domain in the interval 2059-2111 (SYCYAKFEGGKCSSPKSRNHSKQECCCALKGEGWGDPCELCPTEPDEAFRQIC). An N-linked (GlcNAc...) asparagine glycan is attached at N2077. Residues 2127–2165 (DMDECKEPDVCKHGQCINTDGSYRCECPFGYILAGNECV) form the EGF-like 36; calcium-binding domain. O-linked (Glc) serine glycosylation occurs at S2148. The 40-residue stretch at 2166 to 2205 (DTDECSVGNPCGNGTCKNVIGGFECTCEEGFEPGPMMTCE) folds into the EGF-like 37; calcium-binding domain. N2178 is a glycosylation site (N-linked (GlcNAc...) asparagine). Residues 2206–2246 (DINECAQNPLLCAFRCVNTYGSYECKCPVGYVLREDRRMCK) enclose the EGF-like 38; calcium-binding domain. An O-linked (Glc) serine glycan is attached at S2227. Residues 2247-2290 (DEDECEEGKHDCTEKQMECKNLIGTYMCICGPGYQRRPDGEGCV) form the EGF-like 39; calcium-binding domain. Residues 2291-2332 (DENECQTKPGICENGRCLNTRGSYTCECNDGFTASPNQDECL) enclose the EGF-like 40; calcium-binding domain. A glycan (O-linked (Glc) serine) is linked at S2313. One can recognise a TB 9 domain in the interval 2337 to 2390 (GYCFTEVLQNMCQIGSSNRNPVTKSECCCDGGRGWGPHCEICPFQGTVAFKKLC). An EGF-like 41; calcium-binding domain is found at 2402 to 2443 (DIDECKVIHDVCRNGECVNDRGSYHCICKTGYTPDITGTSCV). 21 disulfides stabilise this stretch: C2406-C2418, C2413-C2427, C2429-C2442, C2448-C2459, C2455-C2468, C2470-C2483, C2489-C2500, C2496-C2509, C2511-C2522, C2528-C2541, C2535-C2550, C2552-C2565, C2571-C2581, C2577-C2590, C2592-C2605, C2611-C2622, C2617-C2631, C2633-C2646, C2652-C2663, C2659-C2672, and C2674-C2686. The 41-residue stretch at 2444–2484 (DLNECNQAPKPCNFICKNTEGSYQCSCPKGYILQEDGRSCK) folds into the EGF-like 42; calcium-binding domain. An O-linked (Glc) serine glycan is attached at S2465. One can recognise an EGF-like 43; calcium-binding domain in the interval 2485–2523 (DLDECATKQHNCQFLCVNTIGGFTCKCPPGFTQHHTSCI). Residues 2524-2566 (DNNECTSDINLCGSKGICQNTPGSFTCECQRGFSLDQTGSSCE) enclose the EGF-like 44; calcium-binding domain. O-linked (Glc) serine glycosylation occurs at S2547. Positions 2567-2606 (DVDECEGNHRCQHGCQNIIGGYRCSCPQGYLQHYQWNQCV) constitute an EGF-like 45; calcium-binding domain. The EGF-like 46; calcium-binding domain occupies 2607 to 2647 (DENECLSAHICGGASCHNTLGSYKCMCPAGFQYEQFSGGCQ). S2628 carries O-linked (Glc) serine glycosylation. The EGF-like 47; calcium-binding domain maps to 2648–2687 (DINECGSAQAPCSYGCSNTEGGYLCGCPPGYFRIGQGHCV). S2702 is modified (phosphoserine; by FAM20C). S2709 carries the phosphoserine modification. The interval 2726–2746 (RGRKRRSTNETDASNIEDQSE) is disordered. The N-linked (GlcNAc...) asparagine glycan is linked to N2734. A compositionally biased stretch (polar residues) spans 2735 to 2746 (ETDASNIEDQSE). N-linked (GlcNAc...) asparagine glycans are attached at residues N2750 and N2767.

This sequence belongs to the fibrillin family. Interacts with COL16A1. Interacts with integrin alpha-V/beta-3. Interacts with ADAMTS10; this interaction promotes microfibril assembly. Interacts with THSD4; this interaction promotes fibril formation. Interacts (via N-terminal domain) with FBLN2 and FBLN5. Interacts with ELN. Forms a ternary complex with ELN and FBLN2 or FBLN5 and a significant interaction with ELN seen only in the presence of FBLN2 or FBLN5. Interacts (via N-terminal domain) with LTBP2 (via C-terminal domain) in a Ca(+2)-dependent manner. Interacts (via N-terminal domain) with LTBP1 (via C-terminal domain). Interacts with integrins ITGA5:ITGB1, ITGAV:ITGB3 and ITGAV:ITGB6. Interacts (via N-terminal domain) with BMP2, BMP4, BMP7, BMP10 and GDF5. Interacts (via N-terminal domain) with MFAP2 and MFAP5. Interacts with ADAMTSL5. Interacts with MFAP4. Interacts (via N-terminal domain) with TNFSF11 in a Ca(+2)-dependent manner. Interacts (via N-terminal domain) with EFEMP2; this interaction inhibits EFEMP2 binding to LOX and ELN. In terms of processing, cleavage of N- and C-terminus by furin is required for incorporation into the extracellular matrix and assembly into microfibrils. The C-terminus, which corresponds to the Asprosin chain, was initially thought to constitute a propeptide. Fibrillin-1 and Asprosin chains are still linked together during the secretion from cells, but are subsequently separated by furin, an essential step for incorporation of Fibrillin-1 into the nascent microfibrils. Forms intermolecular disulfide bonds either with other fibrillin-1 molecules or with other components of the microfibrils. Post-translationally, O-glycosylated on serine residues by POGLUT2 and POGLUT3 which is necessary for efficient protein secretion.

It is found in the secreted. It localises to the extracellular space. The protein resides in the extracellular matrix. In terms of biological role, structural component of the 10-12 nm diameter microfibrils of the extracellular matrix, which conveys both structural and regulatory properties to load-bearing connective tissues. Fibrillin-1-containing microfibrils provide long-term force bearing structural support. In tissues such as the lung, blood vessels and skin, microfibrils form the periphery of the elastic fiber, acting as a scaffold for the deposition of elastin. In addition, microfibrils can occur as elastin-independent networks in tissues such as the ciliary zonule, tendon, cornea and glomerulus where they provide tensile strength and have anchoring roles. Fibrillin-1 also plays a key role in tissue homeostasis through specific interactions with growth factors, such as the bone morphogenetic proteins (BMPs), growth and differentiation factors (GDFs) and latent transforming growth factor-beta-binding proteins (LTBPs), cell-surface integrins and other extracellular matrix protein and proteoglycan components. Regulates osteoblast maturation by controlling TGF-beta bioavailability and calibrating TGF-beta and BMP levels, respectively. Negatively regulates osteoclastogenesis by binding and sequestering an osteoclast differentiation and activation factor TNFSF11. This leads to disruption of TNFSF11-induced Ca(2+) signaling and impairment of TNFSF11-mediated nuclear translocation and activation of transcription factor NFATC1 which regulates genes important for osteoclast differentiation and function. Mediates cell adhesion via its binding to cell surface receptors integrins ITGAV:ITGB3 and ITGA5:ITGB1. Binds heparin and this interaction has an important role in the assembly of microfibrils. Functionally, adipokine secreted by white adipose tissue that plays an important regulatory role in the glucose metabolism of liver, muscle and pancreas. Hormone that targets the liver in response to fasting to increase plasma glucose levels. Binds the olfactory receptor OR4M1 at the surface of hepatocytes and promotes hepatocyte glucose release by activating the protein kinase A activity in the liver, resulting in rapid glucose release into the circulation. May act as a regulator of adaptive thermogenesis by inhibiting browning and energy consumption, while increasing lipid deposition in white adipose tissue. Also acts as an orexigenic hormone that increases appetite: crosses the blood brain barrier and exerts effects on the hypothalamus. In the arcuate nucleus of the hypothalamus, asprosin directly activates orexigenic AgRP neurons and indirectly inhibits anorexigenic POMC neurons, resulting in appetite stimulation. Activates orexigenic AgRP neurons via binding to the olfactory receptor OR4M1. May also play a role in sperm motility in testis via interaction with OR4M1 receptor. The protein is Fibrillin-1 of Homo sapiens (Human).